We begin with the raw amino-acid sequence, 102 residues long: Urease subunit beta (102 aa).

Belongs to the urease beta subunit family. Heterotrimer of UreA (gamma), UreB (beta) and UreC (alpha) subunits. Three heterotrimers associate to form the active enzyme.

It is found in the cytoplasm. The enzyme catalyses urea + 2 H2O + H(+) = hydrogencarbonate + 2 NH4(+). It participates in nitrogen metabolism; urea degradation; CO(2) and NH(3) from urea (urease route): step 1/1. This chain is Urease subunit beta, found in Bordetella pertussis (strain Tohama I / ATCC BAA-589 / NCTC 13251).